Reading from the N-terminus, the 1873-residue chain is Girdin (1873 aa).

The Calponin-homology (CH) domain maps to 12–132 (QFMTSPLVTW…KLLLLLLGCA (121 aa)). Positions 196-425 (HLRRLIDERD…EMAQKQSMDE (230 aa)) form a coiled coil. Phosphoserine occurs at positions 233, 237, and 449. Coiled coils occupy residues 458 to 1232 (TSSK…ESKN) and 1268 to 1385 (HKNL…KFYD). Disordered regions lie at residues 816–841 (ENKS…NKRL) and 1013–1034 (EERM…GRES). Position 1020 is a phosphoserine (serine 1020). Serine 1387 carries the phosphoserine modification. The segment at 1390–1408 (RRRGNWITLKMRKLIKSKK) is phosphoinositide-binding. The segment covering 1407-1416 (KKDINRERQK) has biased composition (basic and acidic residues). 3 disordered regions span residues 1407–1459 (KKDI…LGTK), 1560–1602 (TTSF…SNNN), and 1616–1643 (QSRP…GSSP). Phosphoserine; by PKB/AKT1 is present on serine 1417. Polar residues-rich tracts occupy residues 1417 to 1430 (SLTL…SSEG), 1445 to 1459 (VGSN…LGTK), 1560 to 1579 (TTSF…STGS), and 1616 to 1626 (QSRPQSHSSGD). A Phosphothreonine modification is found at threonine 1421. Residues 1674-1704 (KAGSPGSEVVTLQQFLEESNKLTSIQLKSSS) carry the GBA motif. Serine 1677, serine 1692, and serine 1719 each carry phosphoserine. The interval 1715–1825 (SLSVSSDFLG…GTTRRTSIHD (111 aa)) is SH2-like; required for interaction with growth factor receptors. The interval 1738–1873 (SGKTPGDFYD…KSRSREQQSS (136 aa)) is disordered. Positions 1745 to 1755 (FYDRRTTKPEF) are enriched in basic and acidic residues. Tyrosine 1767 is modified (phosphotyrosine). Polar residues-rich tracts occupy residues 1768–1781 (TISS…STQG), 1789–1801 (TSVS…SNPY), and 1809–1820 (SVISTAEGTTRR). The residue at position 1801 (tyrosine 1801) is a Phosphotyrosine. Phosphoserine is present on residues serine 1822 and serine 1839. The span at 1822–1832 (SIHDFLSKDSR) shows a compositional bias: basic and acidic residues. The span at 1839 to 1852 (SSPPTAGSSSTTAS) shows a compositional bias: low complexity. A compositionally biased stretch (basic and acidic residues) spans 1858 to 1873 (QESRNSKSRSREQQSS).

It belongs to the CCDC88 family. Homodimer. Interacts (via GBA motif) with guanine nucleotide-binding protein G(i) alpha subunits GNAI1, GNAI2 and GNAI3. Also interacts (via GNA motif) with guanine nucleotide-binding protein G(s) alpha subunit GNAS. Interaction with G(i) alpha subunits occurs before interaction with GNAS and is regulated by phosphorylation; phosphorylation at Ser-1677 enhances binding to G(i) alpha subunits while phosphorylation at Ser-1692 abolishes G(i) alpha subunit binding, promoting binding to GNAS. Interacts (via C-terminal SH2-like region) with growth factor receptors EGFR, INSR and KDR/VEGFR2 (via their autophosphorylated cytoplasmic tails). Forms a complex with EGFR and GNAI3 which leads to enhanced EGFR signaling and triggering of cell migration; ligand stimulation is required for recruitment of GNAI3 to the complex. Interacts (tyrosine-phosphorylated form) with phosphatidylinositol 3-kinase (PI3K) regulatory subunit PIK3R1/p85a (via SH2 domains); the interaction enables recruitment of PIK3R1 to the EGFR receptor, enhancing PI3K activity and cell migration. Interacts with serine/threonine-protein kinase PRKCQ; the interaction leads to phosphorylation of CCDC88A and inhibition of its guanine nucleotide exchange factor activity. Interacts (via C-terminus) with DISC1; the interaction is direct. Interacts with AKT proteins; the interaction is inhibited in the presence of DISC1. Interacts with AKT1/PKB (via C-terminus). The non-phosphorylated form interacts with phosphatidylinositol 4-phosphate [Pi(4)P] and weakly with phosphatidylinositol 3-phosphate [Pi(3)P]. Interacts with microtubules. Interacts with actin. In terms of processing, phosphorylation is induced by epidermal growth factor (EGF) in a phosphoinositide 3-kinase (PI3K)-dependent manner. Phosphorylation by AKT1/PKB is necessary for the delocalization from the cell membrane and for cell migration. Phosphorylated on tyrosine residues which promotes binding to phosphatidylinositol 3-kinase (PI3K) regulatory subunit PIK3R1/p85a and enhances PI3K activity. Tyrosine-phosphorylated by both receptor and non-receptor tyrosine kinases in vitro. Tyrosine phosphorylation is required for AKT1-dependent phosphorylation of Ser-1417. Phosphorylation at Ser-1692 by PRKCQ disrupts interaction with GNAI3 and inhibits guanine nucleotide exchange factor activity. Expressed in the dentate gyrus, pyramidal cell layer of hippocampal regions CA1 and CA3 at postnatal 15. Expressed highly in neurons. Weakly in neuron progenitors (at protein level). Expressed in the dentate granule cell layer of the hippocampus. Expressed highly in the adult testis, moderately in the brain and at a low level in the spleen, lungs and fat.

Its subcellular location is the cell membrane. The protein resides in the cytoplasm. It is found in the cytosol. It localises to the cytoplasmic vesicle. The protein localises to the cell projection. Its subcellular location is the lamellipodium. The protein resides in the cytoskeleton. It is found in the cilium basal body. It localises to the microtubule organizing center. The protein localises to the centrosome. Its subcellular location is the centriole. In terms of biological role, bifunctional modulator of guanine nucleotide-binding proteins (G proteins). Acts as a non-receptor guanine nucleotide exchange factor which binds to and activates guanine nucleotide-binding protein G(i) alpha subunits. Also acts as a guanine nucleotide dissociation inhibitor for guanine nucleotide-binding protein G(s) subunit alpha GNAS. Essential for cell migration. Interacts in complex with G(i) alpha subunits with the EGFR receptor, retaining EGFR at the cell membrane following ligand stimulation and promoting EGFR signaling which triggers cell migration. Binding to Gi-alpha subunits displaces the beta and gamma subunits from the heterotrimeric G-protein complex which enhances phosphoinositide 3-kinase (PI3K)-dependent phosphorylation and kinase activity of AKT1/PKB. Phosphorylation of AKT1/PKB induces the phosphorylation of downstream effectors GSK3 and FOXO1/FKHR, and regulates DNA replication and cell proliferation. Binds in its tyrosine-phosphorylated form to the phosphatidylinositol 3-kinase (PI3K) regulatory subunit PIK3R1 which enables recruitment of PIK3R1 to the EGFR receptor, enhancing PI3K activity and cell migration. Plays a role as a key modulator of the AKT-mTOR signaling pathway, controlling the tempo of the process of newborn neuron integration during adult neurogenesis, including correct neuron positioning, dendritic development and synapse formation. Inhibition of G(s) subunit alpha GNAS leads to reduced cellular levels of cAMP and suppression of cell proliferation. Essential for the integrity of the actin cytoskeleton. Required for formation of actin stress fibers and lamellipodia. May be involved in membrane sorting in the early endosome. Plays a role in ciliogenesis and cilium morphology and positioning and this may partly be through regulation of the localization of scaffolding protein CROCC/Rootletin. This Mus musculus (Mouse) protein is Girdin (Ccdc88a).